The primary structure comprises 689 residues: Probable E3 ubiquitin ligase complex SCF subunit sconB (689 aa).

Composition is skewed to basic and acidic residues over residues 1 to 12 and 19 to 29; these read MDAHELSFRDGH and MKDECASEEKA. The disordered stretch occupies residues 1-66; it reads MDAHELSFRD…STQDKPHSFN (66 aa). Positions 186–232 constitute an F-box domain; it reads IDFLTALPPEISFKILCYLDTTSLCKAAQVSRRWRALADDDVVWHRM. Residues 267 to 306 are disordered; it reads AATWDVSEQPAETESNSATIDTAASGSKRKPESDKEDTAM. Polar residues predominate over residues 276–291; it reads PAETESNSATIDTAAS. Basic and acidic residues predominate over residues 295 to 306; it reads RKPESDKEDTAM. 7 WD repeats span residues 358 to 395, 398 to 437, 439 to 475, 477 to 518, 572 to 615, 616 to 655, and 658 to 689; these read GHSN…ELRT, GHRS…STYS, HRGG…TCLL, GHTD…RTFH, DTPS…CLRT, FFGH…CERT, and GHSG…SFQT.

This sequence belongs to the WD repeat MET30/SCONB/SCON-2 family. In terms of assembly, component of the SCF(sconB) E3 ubiquitin ligase complex.

It functions in the pathway protein modification; protein ubiquitination. Functionally, component of the SCF(sconB) E3 ubiquitin ligase complex involved in the regulation of sulfur metabolite repression, probably by mediating the inactivation or degradation of the metR transcription factor. This Neosartorya fischeri (strain ATCC 1020 / DSM 3700 / CBS 544.65 / FGSC A1164 / JCM 1740 / NRRL 181 / WB 181) (Aspergillus fischerianus) protein is Probable E3 ubiquitin ligase complex SCF subunit sconB (sconB).